The primary structure comprises 302 residues: 4-hydroxy-tetrahydrodipicolinate synthase (302 aa).

Residue Thr-56 participates in pyruvate binding. The active-site Proton donor/acceptor is the Tyr-145. Lys-173 serves as the catalytic Schiff-base intermediate with substrate. Val-215 serves as a coordination point for pyruvate.

It belongs to the DapA family. As to quaternary structure, homotetramer; dimer of dimers.

Its subcellular location is the cytoplasm. The catalysed reaction is L-aspartate 4-semialdehyde + pyruvate = (2S,4S)-4-hydroxy-2,3,4,5-tetrahydrodipicolinate + H2O + H(+). It participates in amino-acid biosynthesis; L-lysine biosynthesis via DAP pathway; (S)-tetrahydrodipicolinate from L-aspartate: step 3/4. Functionally, catalyzes the condensation of (S)-aspartate-beta-semialdehyde [(S)-ASA] and pyruvate to 4-hydroxy-tetrahydrodipicolinate (HTPA). This Prochlorococcus marinus subsp. pastoris (strain CCMP1986 / NIES-2087 / MED4) protein is 4-hydroxy-tetrahydrodipicolinate synthase.